The primary structure comprises 509 residues: Probable malate:quinone oxidoreductase (509 aa).

Residues 490-509 (LGLNEKEPVSGASEKELVYS) form a disordered region. A compositionally biased stretch (basic and acidic residues) spans 493–509 (NEKEPVSGASEKELVYS).

It belongs to the MQO family. It depends on FAD as a cofactor.

The catalysed reaction is (S)-malate + a quinone = a quinol + oxaloacetate. It participates in carbohydrate metabolism; tricarboxylic acid cycle; oxaloacetate from (S)-malate (quinone route): step 1/1. The protein is Probable malate:quinone oxidoreductase of Geobacillus sp. (strain WCH70).